We begin with the raw amino-acid sequence, 250 residues long: 3-deoxy-manno-octulosonate cytidylyltransferase (250 aa).

Belongs to the KdsB family.

The protein localises to the cytoplasm. The catalysed reaction is 3-deoxy-alpha-D-manno-oct-2-ulosonate + CTP = CMP-3-deoxy-beta-D-manno-octulosonate + diphosphate. Its pathway is nucleotide-sugar biosynthesis; CMP-3-deoxy-D-manno-octulosonate biosynthesis; CMP-3-deoxy-D-manno-octulosonate from 3-deoxy-D-manno-octulosonate and CTP: step 1/1. It participates in bacterial outer membrane biogenesis; lipopolysaccharide biosynthesis. Its function is as follows. Activates KDO (a required 8-carbon sugar) for incorporation into bacterial lipopolysaccharide in Gram-negative bacteria. The chain is 3-deoxy-manno-octulosonate cytidylyltransferase from Legionella pneumophila (strain Lens).